Reading from the N-terminus, the 356-residue chain is Phosphoribosylformylglycinamidine cyclo-ligase (356 aa).

The protein belongs to the AIR synthase family.

It localises to the cytoplasm. The catalysed reaction is 2-formamido-N(1)-(5-O-phospho-beta-D-ribosyl)acetamidine + ATP = 5-amino-1-(5-phospho-beta-D-ribosyl)imidazole + ADP + phosphate + H(+). It participates in purine metabolism; IMP biosynthesis via de novo pathway; 5-amino-1-(5-phospho-D-ribosyl)imidazole from N(2)-formyl-N(1)-(5-phospho-D-ribosyl)glycinamide: step 2/2. The sequence is that of Phosphoribosylformylglycinamidine cyclo-ligase from Acinetobacter baylyi (strain ATCC 33305 / BD413 / ADP1).